A 105-amino-acid chain; its full sequence is Met repressor (105 aa).

Belongs to the MetJ family. Homodimer.

Its subcellular location is the cytoplasm. Functionally, this regulatory protein, when combined with SAM (S-adenosylmethionine) represses the expression of the methionine regulon and of enzymes involved in SAM synthesis. In Actinobacillus pleuropneumoniae serotype 7 (strain AP76), this protein is Met repressor.